Reading from the N-terminus, the 154-residue chain is MGLSDGEWQMVLNIWGKVEGDLAGHGQEVLISLFKAHPETLEKFDKFKNLKSEEEMKSSEDLKKHGCTVLTALGTILKKKGQHAAEIQPLAQSHATKHKIPVKYLEFISEVIIQVLKKRYSGDFGADAQGAMSKALELFRNDIAAKYKELGFQG.

The Globin domain maps to 2–148 (GLSDGEWQMV…FRNDIAAKYK (147 aa)). Residues Ser4 and Ser32 each carry the phosphoserine modification. His65 is a nitrite binding site. Position 65 (His65) interacts with O2. Phosphothreonine is present on Thr68. Residue His94 participates in heme b binding. Phosphoserine is present on residues Ser121 and Ser133.

The protein belongs to the globin family. Monomeric.

The protein localises to the cytoplasm. The protein resides in the sarcoplasm. It catalyses the reaction Fe(III)-heme b-[protein] + nitric oxide + H2O = Fe(II)-heme b-[protein] + nitrite + 2 H(+). It carries out the reaction H2O2 + AH2 = A + 2 H2O. Functionally, monomeric heme protein which primary function is to store oxygen and facilitate its diffusion within muscle tissues. Reversibly binds oxygen through a pentacoordinated heme iron and enables its timely and efficient release as needed during periods of heightened demand. Depending on the oxidative conditions of tissues and cells, and in addition to its ability to bind oxygen, it also has a nitrite reductase activity whereby it regulates the production of bioactive nitric oxide. Under stress conditions, like hypoxia and anoxia, it also protects cells against reactive oxygen species thanks to its pseudoperoxidase activity. This is Myoglobin from Rattus norvegicus (Rat).